The chain runs to 204 residues: MTKYTFKPKDFKAFNVEGLDARMEALNEYIRPQLHELGEYFSDFFTSQTGETFYPHVAKHARRSVNAPKDTWVAFATSKRGYKMLPHFQIGMFEDQLFVMFGIMHEAKDKATRAKVFERKFKAIQQLPDDYRVCLDHMKPDKPFIKDLTDDDLKEAIQRAINVKKGEFFIARAITPQDKRLKSDKAFIAFLEETFDQFLPFYSA.

It belongs to the UPF0637 family.

The chain is UPF0637 protein SA0957 from Staphylococcus aureus (strain N315).